Reading from the N-terminus, the 1038-residue chain is Protein argonaute 1D (1038 aa).

2 disordered regions span residues Met-1 to Pro-58 and Ala-110 to Leu-134. Composition is skewed to gly residues over residues Arg-18–Arg-29 and Gly-43–Tyr-52. Residues Pro-115 to Leu-134 show a composition bias toward low complexity. The region spanning Pro-380–Glu-493 is the PAZ domain. The 322-residue stretch at Leu-669 to Glu-990 folds into the Piwi domain. A disordered region spans residues Asp-992–Val-1021.

The protein belongs to the argonaute family. Ago subfamily.

Its function is as follows. Probably involved in the RNA silencing pathway. May bind to short RNAs such as microRNAs (miRNAs) or short interfering RNAs (siRNAs), and represses the translation of mRNAs which are complementary to them. This Oryza sativa subsp. japonica (Rice) protein is Protein argonaute 1D (AGO1D).